Consider the following 24-residue polypeptide: Brevinin-1Ba (24 aa).

Residues Cys18 and Cys24 are joined by a disulfide bond.

In terms of tissue distribution, expressed by the skin glands.

Its subcellular location is the secreted. In terms of biological role, antibacterial activity against Gram-positive bacterium S.aureus. The sequence is that of Brevinin-1Ba from Lithobates berlandieri (Rio Grande leopard frog).